Here is a 261-residue protein sequence, read N- to C-terminus: Cytochrome c oxidase subunit 3 (261 aa).

The Mitochondrial matrix segment spans residues 1-15 (MAHQAHAYHMVDPSP). A helical membrane pass occupies residues 16–34 (WPLTGAVAALLLTSGLAIW). The Mitochondrial intermembrane portion of the chain corresponds to 35-40 (FPFNSL). The chain crosses the membrane as a helical span at residues 41-66 (ILLTLGLVLLLLTMYQWWRDIVREGT). The Mitochondrial matrix portion of the chain corresponds to 67-72 (FQGHHT). The chain crosses the membrane as a helical span at residues 73–105 (PPVQKGLRYGMILFITSEVFFFLGFFWAFYHSS). Residues 106–128 (LAPTPELGGCWPPTGIVPLNPFE) lie on the Mitochondrial intermembrane side of the membrane. A helical transmembrane segment spans residues 129–152 (VPLLNTAVLLASGVTVTWAHHSIM). The Mitochondrial matrix portion of the chain corresponds to 153-155 (EGE). A helical transmembrane segment spans residues 156-183 (RKQAIHSLTLTILLGFYFTFLQAMEYYE). Over 184-190 (APFTIAD) the chain is Mitochondrial intermembrane. A helical membrane pass occupies residues 191 to 223 (GVYGSTFFVATGFHGLHVIIGSTFLAICLLRQI). Residues 224-232 (RYHFTSEHH) are Mitochondrial matrix-facing. A helical transmembrane segment spans residues 233-256 (FGFEAAAWYWHFVDVVWLFLYISI). The Mitochondrial intermembrane segment spans residues 257-261 (YWWGS).

The protein belongs to the cytochrome c oxidase subunit 3 family. As to quaternary structure, component of the cytochrome c oxidase (complex IV, CIV), a multisubunit enzyme composed of 14 subunits. The complex is composed of a catalytic core of 3 subunits MT-CO1, MT-CO2 and MT-CO3, encoded in the mitochondrial DNA, and 11 supernumerary subunits COX4I, COX5A, COX5B, COX6A, COX6B, COX6C, COX7A, COX7B, COX7C, COX8 and NDUFA4, which are encoded in the nuclear genome. The complex exists as a monomer or a dimer and forms supercomplexes (SCs) in the inner mitochondrial membrane with NADH-ubiquinone oxidoreductase (complex I, CI) and ubiquinol-cytochrome c oxidoreductase (cytochrome b-c1 complex, complex III, CIII), resulting in different assemblies (supercomplex SCI(1)III(2)IV(1) and megacomplex MCI(2)III(2)IV(2)).

It is found in the mitochondrion inner membrane. It carries out the reaction 4 Fe(II)-[cytochrome c] + O2 + 8 H(+)(in) = 4 Fe(III)-[cytochrome c] + 2 H2O + 4 H(+)(out). Component of the cytochrome c oxidase, the last enzyme in the mitochondrial electron transport chain which drives oxidative phosphorylation. The respiratory chain contains 3 multisubunit complexes succinate dehydrogenase (complex II, CII), ubiquinol-cytochrome c oxidoreductase (cytochrome b-c1 complex, complex III, CIII) and cytochrome c oxidase (complex IV, CIV), that cooperate to transfer electrons derived from NADH and succinate to molecular oxygen, creating an electrochemical gradient over the inner membrane that drives transmembrane transport and the ATP synthase. Cytochrome c oxidase is the component of the respiratory chain that catalyzes the reduction of oxygen to water. Electrons originating from reduced cytochrome c in the intermembrane space (IMS) are transferred via the dinuclear copper A center (CU(A)) of subunit 2 and heme A of subunit 1 to the active site in subunit 1, a binuclear center (BNC) formed by heme A3 and copper B (CU(B)). The BNC reduces molecular oxygen to 2 water molecules using 4 electrons from cytochrome c in the IMS and 4 protons from the mitochondrial matrix. The chain is Cytochrome c oxidase subunit 3 (mt-co3) from Tetraodon nigroviridis (Spotted green pufferfish).